The following is a 2078-amino-acid chain: Nascent polypeptide-associated complex subunit alpha, muscle-specific form (2078 aa).

Disordered stretches follow at residues 1-21 (MPGEATETVPATEQELPQPQA), 37-96 (ALGQ…LGTA), 595-614 (LGEPLPIGKPASSMTSPLGV), and 732-1944 (KSVP…KAMS). 2 stretches are compositionally biased toward polar residues: residues 9–21 (VPATEQELPQPQA) and 60–75 (AANQASPFPSPSTIAS). Residues 775 to 786 (SGASATASSKGT) are compositionally biased toward low complexity. Positions 837–847 (PENSLSFQGSK) are enriched in polar residues. At Ser917 the chain carries Phosphoserine. Residues 933–1020 (SPSPKGAPTP…PPAVTPPSPK (88 aa)) are compositionally biased toward pro residues. Low complexity predominate over residues 1045-1067 (GSPAATPLPKGAPTTPAATLPSP). The span at 1080–1113 (PTPPAATPPSPKGGPATPSPKGAPMPPAATPPSP) shows a compositional bias: pro residues. Residues 1114–1130 (KGGLATPPHKGAPTTPA) show a composition bias toward low complexity. Pro residues-rich tracts occupy residues 1131–1147 (ATPPSPKGGLATPPPKG) and 1154–1170 (ATPPSPKGGLATPPPKG). A Phosphoserine modification is found at Ser1181. Low complexity-rich tracts occupy residues 1183 to 1199 (KGGLATPSPKGAPTTPA), 1206 to 1222 (KGGLATPSPKGAPTTPA), and 1229 to 1245 (KGGLATPSPKGAPTTPA). Pro residues-rich tracts occupy residues 1246-1270 (ATPPSPKGGPATPPPKGAPTPPAAT) and 1292-1344 (VTPP…PSPK). Low complexity predominate over residues 1345–1366 (GTPTLPATTPSSKGGPTTPSSK). 2 positions are modified to phosphoserine: Ser1397 and Ser1474. Positions 1470-1481 (VTPPSPKEPPAP) are enriched in pro residues. A compositionally biased stretch (low complexity) spans 1485-1507 (ATSSSPKKAPATPAPMGAPTLPA). The span at 1611 to 1625 (KEAPTPPAVTPPSPE) shows a compositional bias: pro residues. A compositionally biased stretch (low complexity) spans 1626 to 1637 (KGPATPAPKGTP). Residues 1647 to 1656 (LKDSPTSPAS) show a composition bias toward polar residues. Residues 1744-1756 (DSSKTAKGKDASH) show a composition bias toward basic and acidic residues. Positions 1794–1811 (PSPPVSLPLAPSPVPTLP) are enriched in pro residues. A PXLXP motif is present at residues 1841–1845 (LPLIP). The span at 1876-1891 (SAKQPVTKNNKGSGTE) shows a compositional bias: polar residues. Over residues 1892-1905 (SDSDESVPELEEQD) the composition is skewed to acidic residues. Position 1906 is a phosphoserine; by ILK1 (Ser1906). The span at 1907–1920 (TQATTQQAQLAAAA) shows a compositional bias: low complexity. A required for DNA-binding region spans residues 1932 to 1943 (QSRSEKKARKAM). The 66-residue stretch at 1933-1998 (SRSEKKARKA…AKIEDLSQQA (66 aa)) folds into the NAC-A/B domain. Ser1995 bears the Phosphoserine mark. An N6-acetyllysine; alternate modification is found at Lys2005. A Glycyl lysine isopeptide (Lys-Gly) (interchain with G-Cter in SUMO2); alternate cross-link involves residue Lys2005. Thr2022 is subject to Phosphothreonine; by GSK3-beta. Thr2024 bears the Phosphothreonine mark. Phosphoserine occurs at positions 2029, 2049, 2054, and 2066. The region spanning 2039–2078 (VEVKDIELVMSQANVSRAKAVRALKNNSNDIVNAIMELTM) is the UBA domain.

In terms of assembly, interacts (via PXLXP motif) with the muscle-restricted histone methyltransferase SMYD1 (via MYND-type zinc finger).

The protein localises to the cytoplasm. Its subcellular location is the nucleus. Cardiac- and muscle-specific transcription factor. May act to regulate the expression of genes involved in the development of myotubes. Plays a critical role in ventricular cardiomyocyte expansion and regulates postnatal skeletal muscle growth and regeneration. Involved in the organized assembly of thick and thin filaments of myofibril sarcomeres. The protein is Nascent polypeptide-associated complex subunit alpha, muscle-specific form (NACA) of Homo sapiens (Human).